Reading from the N-terminus, the 1777-residue chain is Non-reducing polyketide synthase nscA (1777 aa).

The N-terminal acylcarrier protein transacylase domain (SAT) stretch occupies residues 27 to 261 (DLFRRLDQHS…PLPVYDGLCH (235 aa)). A Ketosynthase family 3 (KS3) domain is found at 396–829 (SSKLAIVGMA…GGNTTLLLED (434 aa)). Active-site for beta-ketoacyl synthase activity residues include Cys569, His704, and His747. The segment at 934-1212 (AFTGQGAYYH…SAIPSCRRNE (279 aa)) is malonyl-CoA:ACP transacylase (MAT) domain. The interval 1297–1616 (TSLVHQITAE…RLLMDRFFSP (320 aa)) is product template (PT) domain. The segment at 1301-1437 (HQITAETVEA…ATIRFEDPEA (137 aa)) is N-terminal hotdog fold. Positions 1301–1611 (HQITAETVEA…FRRVPRLLMD (311 aa)) constitute a PKS/mFAS DH domain. The Proton acceptor; for dehydratase activity role is filled by His1333. A C-terminal hotdog fold region spans residues 1465–1611 (ASRLSKPLAY…FRRVPRLLMD (147 aa)). The active-site Proton donor; for dehydratase activity is the Asp1522. Residues 1674-1704 (LLATSSKSSTPKESPIVTPAESERAEPVDNS) are disordered. Residues 1677–1688 (TSSKSSTPKESP) show a composition bias toward low complexity. In terms of domain architecture, Carrier spans 1700-1777 (PVDNSMTSQC…EMTAWIEEYC (78 aa)). Ser1737 is modified (O-(pantetheine 4'-phosphoryl)serine).

The cofactor is pantetheine 4'-phosphate.

It participates in secondary metabolite biosynthesis. In terms of biological role, non-reducing polyketide synthase; part of the gene cluster that mediates the biosynthesis of neosartoricin B, a prenylated anthracenone that probably exhibits T-cell antiproliferative activity, suggestive of a physiological role as an immunosuppressive agent. The non-reducing polyketide synthase nscA probably synthesizes and cyclizes the decaketide backbone. The hydrolase nscB then mediates the product release through hydrolysis followed by spontaneous decarboxylation. The prenyltransferase nscD catalyzes the addition of the dimethylallyl group to the aromatic C5. The FAD-dependent monooxygenase nscC is then responsible for the stereospecific hydroxylation at C2. Neosartoricin B can be converted into two additional compounds neosartoricins C and D. Neosartoricin C is a spirocyclic compound that is cyclized through the attack of C3 hydroxyl on C14, followed by dehydration. On the other hand, neosartoricin D is a further cyclized compound in which attack of C2 on C14 in neosartoricin C results in the formation of the acetal-containing dioxabicyclo-octanone ring. Both of these compounds are novel and possibly represent related metabolites of the gene cluster. The chain is Non-reducing polyketide synthase nscA from Trichophyton equinum (strain ATCC MYA-4606 / CBS 127.97) (Horse ringworm fungus).